The primary structure comprises 136 residues: Transcription antitermination protein NusB (136 aa).

This sequence belongs to the NusB family.

Functionally, involved in transcription antitermination. Required for transcription of ribosomal RNA (rRNA) genes. Binds specifically to the boxA antiterminator sequence of the ribosomal RNA (rrn) operons. This is Transcription antitermination protein NusB from Arthrobacter sp. (strain FB24).